We begin with the raw amino-acid sequence, 116 residues long: NADH-ubiquinone oxidoreductase chain 3 (116 aa).

The next 3 membrane-spanning stretches (helical) occupy residues 4 to 24 (LIIT…IAFW), 56 to 76 (FFLI…LLPL), and 88 to 108 (TLIL…YEWI).

Belongs to the complex I subunit 3 family. As to quaternary structure, core subunit of respiratory chain NADH dehydrogenase (Complex I) which is composed of 45 different subunits. Interacts with TMEM186. Interacts with TMEM242.

Its subcellular location is the mitochondrion inner membrane. The enzyme catalyses a ubiquinone + NADH + 5 H(+)(in) = a ubiquinol + NAD(+) + 4 H(+)(out). Its function is as follows. Core subunit of the mitochondrial membrane respiratory chain NADH dehydrogenase (Complex I) which catalyzes electron transfer from NADH through the respiratory chain, using ubiquinone as an electron acceptor. Essential for the catalytic activity of complex I. This chain is NADH-ubiquinone oxidoreductase chain 3, found in Osphranter robustus (Wallaroo).